The sequence spans 214 residues: MSGLSQRQQRIYDYIKQFIRTNGYAPAIRDIQRELSISSTSVVAYNLRALESKGHIRREGNISRAIELINAEQPLPTVLGGQRVPVLGVIAAGQPIPVPNDSANSDDSVLVPEEIVGNDKLGDVYALRVKGYSMVDALIADGDIVLLRYQATAENGEMVAARIRDENEVTLKRIYWEGDRVRLQPANVTMEAMYYPSTNVEVQGRVVGVIRNLG.

Residues 28-48 (IRDIQRELSISSTSVVAYNLR) constitute a DNA-binding region (H-T-H motif). Catalysis depends on for autocatalytic cleavage activity residues Ser133 and Lys172.

The protein belongs to the peptidase S24 family. As to quaternary structure, homodimer.

The catalysed reaction is Hydrolysis of Ala-|-Gly bond in repressor LexA.. Its function is as follows. Represses a number of genes involved in the response to DNA damage (SOS response), including recA and lexA. In the presence of single-stranded DNA, RecA interacts with LexA causing an autocatalytic cleavage which disrupts the DNA-binding part of LexA, leading to derepression of the SOS regulon and eventually DNA repair. This Herpetosiphon aurantiacus (strain ATCC 23779 / DSM 785 / 114-95) protein is LexA repressor.